We begin with the raw amino-acid sequence, 71 residues long: SRY-related protein LG27 (71 aa).

Residues 1–68 constitute a DNA-binding region (HMG box); that stretch reads VKRPMNAFMV…KHMADYPNYK (68 aa).

Its subcellular location is the nucleus. In Eublepharis macularius (Leopard gecko), this protein is SRY-related protein LG27.